Consider the following 427-residue polypeptide: Probable fatty acid methyltransferase Rv3720 (427 aa).

S-adenosyl-L-methionine contacts are provided by residues Tyr-167–Thr-168, Leu-202–Gly-210, and Thr-227–Gln-232.

It belongs to the CFA/CMAS family.

Its function is as follows. May be a S-adenosylmethionine-dependent methyltransferase involved in fatty acid metabolism. The chain is Probable fatty acid methyltransferase Rv3720 from Mycobacterium tuberculosis (strain ATCC 25618 / H37Rv).